Reading from the N-terminus, the 266-residue chain is Ribosomal RNA small subunit methyltransferase J (266 aa).

Residues 109 to 110 (RD), 125 to 126 (ER), and Asp185 each bind S-adenosyl-L-methionine.

The protein belongs to the methyltransferase superfamily. RsmJ family.

The protein resides in the cytoplasm. It catalyses the reaction guanosine(1516) in 16S rRNA + S-adenosyl-L-methionine = N(2)-methylguanosine(1516) in 16S rRNA + S-adenosyl-L-homocysteine + H(+). Its function is as follows. Specifically methylates the guanosine in position 1516 of 16S rRNA. This is Ribosomal RNA small subunit methyltransferase J from Cellvibrio japonicus (strain Ueda107) (Pseudomonas fluorescens subsp. cellulosa).